The following is a 150-amino-acid chain: Large ribosomal subunit protein uL13 (150 aa).

The protein belongs to the universal ribosomal protein uL13 family. Part of the 50S ribosomal subunit.

Its function is as follows. This protein is one of the early assembly proteins of the 50S ribosomal subunit, although it is not seen to bind rRNA by itself. It is important during the early stages of 50S assembly. The polypeptide is Large ribosomal subunit protein uL13 (Chlamydia abortus (strain DSM 27085 / S26/3) (Chlamydophila abortus)).